Consider the following 308-residue polypeptide: Pantoate--beta-alanine ligase (308 aa).

A propeptide (removed; partial) is located at residue A2.

Belongs to the pantothenate synthetase family. As to quaternary structure, homodimer. In terms of tissue distribution, expressed at low levels in leaf and root.

It is found in the cytoplasm. The enzyme catalyses (R)-pantoate + beta-alanine + ATP = (R)-pantothenate + AMP + diphosphate + H(+). It participates in cofactor biosynthesis; (R)-pantothenate biosynthesis; (R)-pantothenate from (R)-pantoate and beta-alanine: step 1/1. The chain is Pantoate--beta-alanine ligase (PANC) from Lotus japonicus (Lotus corniculatus var. japonicus).